Reading from the N-terminus, the 309-residue chain is Protein FdhE homolog (309 aa).

Positions 1–22 (MSIRIVPQEQLEQNGKSTPEGH) are disordered.

Belongs to the FdhE family.

The protein localises to the cytoplasm. Necessary for formate dehydrogenase activity. The sequence is that of Protein FdhE homolog from Pectobacterium carotovorum subsp. carotovorum (strain PC1).